A 375-amino-acid chain; its full sequence is 23S rRNA (uracil(747)-C(5))-methyltransferase RlmC (375 aa).

Positions 3, 11, 14, and 87 each coordinate [4Fe-4S] cluster. The S-adenosyl-L-methionine site is built by glutamine 212, phenylalanine 241, glutamate 262, and asparagine 307. Cysteine 334 functions as the Nucleophile in the catalytic mechanism.

The protein belongs to the class I-like SAM-binding methyltransferase superfamily. RNA M5U methyltransferase family. RlmC subfamily.

The catalysed reaction is uridine(747) in 23S rRNA + S-adenosyl-L-methionine = 5-methyluridine(747) in 23S rRNA + S-adenosyl-L-homocysteine + H(+). In terms of biological role, catalyzes the formation of 5-methyl-uridine at position 747 (m5U747) in 23S rRNA. In Shigella boydii serotype 4 (strain Sb227), this protein is 23S rRNA (uracil(747)-C(5))-methyltransferase RlmC.